Reading from the N-terminus, the 266-residue chain is MKSTCYMIGILLMILQNTYQSPVPETDANSRSVKAARNEAVDDSEQLKEVKRHSQGTFTSDYSKYLDSRRAQDFVQWLMNTKRSGELSRRNADYERHAEGTFTSDVTQQLDEKAAKEFIDWLINGGPSKEIISRRNAEFERHAEGTYTNDVTEYLEEKAAKEFIEWLIKGKPKKIRYSRHAEGTFTNDMTNYLEEKAAKEFVGWLIKGRPKRNFSEVHSVEEMDRRHADGSFTNDINKVLDIIAAQEFLDWVINTQETERDLLEEQ.

Residues 1-20 (MKSTCYMIGILLMILQNTYQ) form the signal peptide. 6 propeptides span residues 21 to 50 (SPVPETDANSRSVKAARNEAVDDSEQLKEV), 84 to 95 (SGELSRRNADYE), 136 to 140 (NAEFE), 175 to 178 (IRYS), 213 to 224 (NFSEVHSVEEMD), and 261 to 266 (DLLEEQ). Residues 23–32 (VPETDANSRS) show a composition bias toward polar residues. Residues 23–44 (VPETDANSRSVKAARNEAVDDS) form a disordered region.

This sequence belongs to the glucagon family.

The protein resides in the secreted. Functionally, promotes hydrolysis of glycogen and lipids, and raises the blood sugar level. In Xenopus laevis (African clawed frog), this protein is Glucagon-1 (gcg1).